The primary structure comprises 1892 residues: Sodium channel protein type 4 subunit alpha A (1892 aa).

The Cytoplasmic segment spans residues 1–125; that stretch reads MATILPPPGT…RGAIKILIHS (125 aa). Residues 34–54 are disordered; the sequence is APKAGAHEEEEPPTPNPDLEA. An I repeat occupies 107–433; the sequence is ILSPFSLVRR…VVAMAYDEQN (327 aa). The helical transmembrane segment at 126–144 threads the bilayer; sequence LFSTLIMITILSNCVFMTM. Residues 145 to 151 are Extracellular-facing; it reads SNPPAWS. The chain crosses the membrane as a helical span at residues 152–172; the sequence is KTVEYVFTGIYTFEATVKVLS. The Cytoplasmic portion of the chain corresponds to 173 to 186; the sequence is RGFCVGPFTFLRDP. A helical membrane pass occupies residues 187–204; the sequence is WNWLDFMVISMAYITEFV. Residues 205–210 lie on the Extracellular side of the membrane; that stretch reads DLGNVS. Asn-208 carries N-linked (GlcNAc...) asparagine glycosylation. The chain crosses the membrane as a helical span at residues 211-227; sequence ALRTFRVLRALKTITVI. The Cytoplasmic portion of the chain corresponds to 228 to 246; sequence PGLKTIVAALIQSVKKMVD. The chain crosses the membrane as a helical span at residues 247–266; it reads VMILTVFALAVFALVGLQLF. Residues 267–370 lie on the Extracellular side of the membrane; that stretch reads MGNLRHKCIR…PNYGYTSFDS (104 aa). Cys-274 and Cys-339 are oxidised to a cystine. 3 N-linked (GlcNAc...) asparagine glycosylation sites follow: Asn-281, Asn-294, and Asn-341. A disulfide bridge links Cys-348 with Cys-354. Residues 371–395 constitute an intramembrane region (pore-forming); sequence FGWAFLALFRLMTQDNWESLFQLTL. Residues 396 to 402 lie on the Extracellular side of the membrane; the sequence is RAAGQTY. The helical transmembrane segment at 403–423 threads the bilayer; that stretch reads MLFFVVVIFLGSFYLINLILA. At 424 to 612 the chain is on the cytoplasmic side; it reads VVAMAYDEQN…KWVHFVVMDP (189 aa). One copy of the II repeat lies at 594-866; sequence CCEKWVVFKK…QIAIGRITRG (273 aa). The helical transmembrane segment at 613 to 631 threads the bilayer; that stretch reads FVDLAITICIVLNTLFMAM. At 632–642 the chain is on the extracellular side; it reads EHYPMTEEFDY. A helical transmembrane segment spans residues 643-662; it reads MLSVGNLVFTGIFAAEMFFK. At 663–676 the chain is on the cytoplasmic side; that stretch reads LIAMDPYYYFQVGW. The helical transmembrane segment at 677 to 696 threads the bilayer; that stretch reads NIFDSIIVTLSLVELGLANV. At 697–698 the chain is on the extracellular side; the sequence is QG. A helical transmembrane segment spans residues 699-716; that stretch reads LSVLRSFRLLRVFKLAKS. At 717-732 the chain is on the cytoplasmic side; sequence WPTLNMLIKIIGNSVG. Residues 733–751 form a helical membrane-spanning segment; it reads ALGNLTLVLAIIVFIFAVV. Residues 752 to 780 lie on the Extracellular side of the membrane; it reads GMQLFGKSYKDCVCKISSDCELPRWHMND. An intrachain disulfide couples Cys-765 to Cys-771. Residues 781–801 constitute an intramembrane region (pore-forming); that stretch reads FFHSFLIVFRILCGEWIETMW. The Extracellular portion of the chain corresponds to 802–812; it reads DCMEVAGAGMC. Residues Cys-803 and Cys-812 are joined by a disulfide bond. The helical transmembrane segment at 813-831 threads the bilayer; that stretch reads LVVFMMVMVIGNLVVLNLF. The Cytoplasmic portion of the chain corresponds to 832 to 1071; it reads LALLLSSFSG…TCFTIVEHDW (240 aa). 2 disordered regions span residues 884–905 and 945–982; these read REPQ…TEGM and LGES…GVED. The segment covering 948-971 has biased composition (acidic residues); it reads SDSENPSEDDDDQEDDVDSEVTCE. One copy of the III repeat lies at 1052 to 1366; sequence KGKKWWNLRK…KKYYEAMKKL (315 aa). The helical transmembrane segment at 1072–1089 threads the bilayer; it reads FETFIIFMILLSSGALAF. Topologically, residues 1090 to 1102 are extracellular; that stretch reads EDIYIERRRTVKI. The helical transmembrane segment at 1103–1121 threads the bilayer; sequence VLEFADKVFTFIFVIEMLL. Residues 1122-1135 are Cytoplasmic-facing; it reads KWVAYGFKTYFTNA. Residues 1136–1154 form a helical membrane-spanning segment; the sequence is WCWLDFFIVDISLISLSAN. The Extracellular segment spans residues 1155–1162; sequence LMGFSDLG. Residues 1163–1181 form a helical membrane-spanning segment; the sequence is PIKSLRTLRALRPLRALSR. At 1182 to 1198 the chain is on the cytoplasmic side; it reads FEGMRVVVNALIGAIPS. A helical transmembrane segment spans residues 1199–1218; sequence IFNVLLVCLIFWLIFSIMGV. Topologically, residues 1219 to 1270 are extracellular; that stretch reads NLFAGKFYRCINTTTAELFPISVVNNKSDCVALQEATQEARWVNVKVNYDNV. Cys-1228 and Cys-1248 are disulfide-bonded. Asn-1230 and Asn-1244 each carry an N-linked (GlcNAc...) asparagine glycan. An intramembrane region (pore-forming) is located at residues 1271–1292; sequence AKGYLSLLQIATFKGWMDIMYP. The Extracellular portion of the chain corresponds to 1293–1309; sequence AVDSREVEEQPSYEINL. The helical transmembrane segment at 1310-1331 threads the bilayer; that stretch reads YMYIYFVIFIIFGSFFTLNLFI. Residues 1332–1394 lie on the Cytoplasmic side of the membrane; sequence GVIIDNFNQQ…LVFDFISQQF (63 aa). Positions 1350–1352 are important for rapid channel inactivation; it reads IFM. An IV repeat occupies 1375-1673; sequence IPRPANLIQG…WEKFDTGGTQ (299 aa). Residues 1395 to 1412 traverse the membrane as a helical segment; it reads FDIFIMVLICLNMVTMMV. The Extracellular portion of the chain corresponds to 1413–1423; it reads ETDDQSPAKED. The chain crosses the membrane as a helical span at residues 1424-1442; the sequence is FLFKVNVAFIVVFTGECTL. At 1443-1454 the chain is on the cytoplasmic side; that stretch reads KLFALRHYFFTN. Residues 1455–1472 form a helical membrane-spanning segment; it reads GWNIFDFIVVILSIAGTM. Residues 1473–1485 are Extracellular-facing; the sequence is LSDIIEKYFVSPT. The chain crosses the membrane as a helical span at residues 1486–1502; that stretch reads LFRVIRLARIGRILRLI. The Cytoplasmic portion of the chain corresponds to 1503-1521; that stretch reads KGARGIRTLLFALMMSLPA. Residues 1522–1539 form a helical membrane-spanning segment; the sequence is LFNIGLLLFLIMFIFSIF. Residues 1540 to 1561 lie on the Extracellular side of the membrane; the sequence is GMSNFAYVKKEAGINDMFNFET. Residues 1562 to 1584 constitute an intramembrane region (pore-forming); that stretch reads FGSSIICLFQITTSAGWDTLLLP. At 1585–1614 the chain is on the extracellular side; it reads MLNKEPPDCDPAFENPGTDVKGNCGNPMMG. A disulfide bond links Cys-1593 and Cys-1608. Residues 1615-1637 form a helical membrane-spanning segment; it reads MVFFCSYIIISFLVVVNMYIAII. Topologically, residues 1638-1892 are cytoplasmic; it reads LENFNVAQEE…TQTILRETNV (255 aa). The IQ domain maps to 1767–1796; that stretch reads EDMAAVVIQRAYRNHLHKRGIHHAAYIQRS. Residues 1836-1856 are disordered; sequence RRRPDPQTRCSGARCSPEPPE.

This sequence belongs to the sodium channel (TC 1.A.1.10) family. Nav1.4/SCN4A subfamily. In terms of assembly, voltage-gated sodium (Nav) channels consist of an ion-conducting alpha subunit which is functional on its own associated with regulatory beta subunits.

The protein resides in the cell membrane. It catalyses the reaction Na(+)(in) = Na(+)(out). In terms of biological role, pore-forming subunit of a voltage-gated sodium (Nav) channel that directly mediates the depolarizing phase of action potentials in excitable membranes. Navs, also called VGSCs (voltage-gated sodium channels) or VDSCs (voltage-dependent sodium channels), operate by switching between closed and open conformations depending on the voltage difference across the membrane. In the open conformation they allow Na(+) ions to selectively pass through the pore, along their electrochemical gradient. The influx of Na+ ions provokes membrane depolarization, initiating the propagation of electrical signals throughout cells and tissues. This chain is Sodium channel protein type 4 subunit alpha A (scn4aa), found in Takifugu rubripes (Japanese pufferfish).